The primary structure comprises 497 residues: 3-octaprenyl-4-hydroxybenzoate carboxy-lyase (497 aa).

N175 is a binding site for Mn(2+). Residues 178 to 180, 192 to 194, and 197 to 198 each bind prenylated FMN; these read IYR, RWL, and RG. E241 contributes to the Mn(2+) binding site. Catalysis depends on D290, which acts as the Proton donor.

The protein belongs to the UbiD family. In terms of assembly, homohexamer. The cofactor is prenylated FMN. Mn(2+) is required as a cofactor.

The protein localises to the cell membrane. The catalysed reaction is a 4-hydroxy-3-(all-trans-polyprenyl)benzoate + H(+) = a 2-(all-trans-polyprenyl)phenol + CO2. It participates in cofactor biosynthesis; ubiquinone biosynthesis. Its function is as follows. Catalyzes the decarboxylation of 3-octaprenyl-4-hydroxy benzoate to 2-octaprenylphenol, an intermediate step in ubiquinone biosynthesis. The sequence is that of 3-octaprenyl-4-hydroxybenzoate carboxy-lyase from Shigella sonnei (strain Ss046).